The primary structure comprises 637 residues: Probable ATP-binding protein YheS (637 aa).

ABC transporter domains follow at residues isoleucine 2–glutamine 246 and leucine 313–asparagine 527. ATP contacts are provided by residues glycine 34–serine 41 and glycine 345–serine 352. The segment at glutamine 523–proline 559 is disordered. The segment covering alanine 542–leucine 553 has biased composition (basic and acidic residues).

The protein belongs to the ABC transporter superfamily. ABCF family. YheS subfamily.

Its function is as follows. Genetic data indicate it may be involved in ribosome assembly or function. Ectopic expression exacerbates the cold-sensitive growth phenotype of a bipA deletion. This Escherichia coli O6:H1 (strain CFT073 / ATCC 700928 / UPEC) protein is Probable ATP-binding protein YheS (yheS).